A 261-amino-acid chain; its full sequence is Kallikrein-1E2 (261 aa).

Residues 1 to 17 (MWFLVLCLDLSLGETGA) form the signal peptide. Positions 18–24 (LPPIQSR) are cleaved as a propeptide — activation peptide. One can recognise a Peptidase S1 domain in the interval 25 to 258 (IIGGWECEKH…HLKWIKETIE (234 aa)). Disulfide bonds link Cys-31–Cys-173, Cys-50–Cys-66, Cys-152–Cys-219, Cys-184–Cys-198, and Cys-209–Cys-234. The Charge relay system role is filled by His-65. Asn-79 carries N-linked (GlcNAc...) asparagine glycosylation. Asp-120 functions as the Charge relay system in the catalytic mechanism. Ser-213 functions as the Charge relay system in the catalytic mechanism.

This sequence belongs to the peptidase S1 family. Kallikrein subfamily. Detected in prostate and semen.

The protein localises to the secreted. It catalyses the reaction Preferential cleavage of Arg-|-Xaa bonds in small molecule substrates. Highly selective action to release kallidin (lysyl-bradykinin) from kininogen involves hydrolysis of Met-|-Xaa or Leu-|-Xaa.. Functionally, glandular kallikreins cleave Met-Lys and Arg-Ser bonds in kininogen to release Lys-bradykinin. This Equus caballus (Horse) protein is Kallikrein-1E2 (KLK1E2).